Here is a 311-residue protein sequence, read N- to C-terminus: Tyrosine recombinase XerC (311 aa).

In terms of domain architecture, Core-binding (CB) spans aspartate 11–isoleucine 97. The Tyr recombinase domain maps to threonine 118–aspartate 298. Active-site residues include arginine 157, lysine 181, histidine 250, arginine 253, and histidine 276. Tyrosine 285 functions as the O-(3'-phospho-DNA)-tyrosine intermediate in the catalytic mechanism.

This sequence belongs to the 'phage' integrase family. XerC subfamily. Forms a cyclic heterotetrameric complex composed of two molecules of XerC and two molecules of XerD.

It localises to the cytoplasm. Site-specific tyrosine recombinase, which acts by catalyzing the cutting and rejoining of the recombining DNA molecules. The XerC-XerD complex is essential to convert dimers of the bacterial chromosome into monomers to permit their segregation at cell division. It also contributes to the segregational stability of plasmids. This Vibrio cholerae serotype O1 (strain ATCC 39541 / Classical Ogawa 395 / O395) protein is Tyrosine recombinase XerC.